We begin with the raw amino-acid sequence, 217 residues long: uncharacterized protein (217 aa).

The segment covering 59-76 (AQSTIQRTSSLPVPSSSN) has biased composition (polar residues). Disordered regions lie at residues 59 to 105 (AQST…ETAN) and 124 to 217 (KKSL…HISK). Ser-68 is modified (phosphoserine). Thr-92 is subject to Phosphothreonine. The segment covering 124–135 (KKSLERRVREEQ) has biased composition (basic and acidic residues). Positions 136–147 (EEKTDNEDDNDV) are enriched in acidic residues. Over residues 148-157 (EISTQESLEN) the composition is skewed to polar residues. Positions 173 to 188 (LEDDIEGQEFSFDDQD) are enriched in acidic residues. Residues 199–217 (WLSSQKQQGSPLTSDHISK) show a composition bias toward polar residues.

This is an uncharacterized protein from Schizosaccharomyces pombe (strain 972 / ATCC 24843) (Fission yeast).